A 354-amino-acid chain; its full sequence is UDP-N-acetylglucosamine--N-acetylmuramyl-(pentapeptide) pyrophosphoryl-undecaprenol N-acetylglucosamine transferase (354 aa).

UDP-N-acetyl-alpha-D-glucosamine-binding positions include 11–13, Arg-164, Ser-194, and Gln-289; that span reads TAG.

Belongs to the glycosyltransferase 28 family. MurG subfamily.

It localises to the cell membrane. The catalysed reaction is di-trans,octa-cis-undecaprenyl diphospho-N-acetyl-alpha-D-muramoyl-L-alanyl-D-glutamyl-meso-2,6-diaminopimeloyl-D-alanyl-D-alanine + UDP-N-acetyl-alpha-D-glucosamine = di-trans,octa-cis-undecaprenyl diphospho-[N-acetyl-alpha-D-glucosaminyl-(1-&gt;4)]-N-acetyl-alpha-D-muramoyl-L-alanyl-D-glutamyl-meso-2,6-diaminopimeloyl-D-alanyl-D-alanine + UDP + H(+). Its pathway is cell wall biogenesis; peptidoglycan biosynthesis. Cell wall formation. Catalyzes the transfer of a GlcNAc subunit on undecaprenyl-pyrophosphoryl-MurNAc-pentapeptide (lipid intermediate I) to form undecaprenyl-pyrophosphoryl-MurNAc-(pentapeptide)GlcNAc (lipid intermediate II). This is UDP-N-acetylglucosamine--N-acetylmuramyl-(pentapeptide) pyrophosphoryl-undecaprenol N-acetylglucosamine transferase from Clostridium botulinum (strain ATCC 19397 / Type A).